Consider the following 378-residue polypeptide: Tafazzin (378 aa).

Over 1–137 (MFMVVCSNLR…RLRNPSKFWY (137 aa)) the chain is Mitochondrial intermembrane. Positions 46-112 (APEARPVPDE…DQDADPSLDV (67 aa)) are disordered. Over residues 51–67 (PVPDERYPGSQQDRKDI) the composition is skewed to basic and acidic residues. Residues 138–158 (VVSQFVVSAVGIFSKVVLMFL) lie within the membrane without spanning it. Residues 159–378 (NKPRVYNRER…ETEKLHRERN (220 aa)) lie on the Mitochondrial intermembrane side of the membrane. The short motif at 188 to 193 (HYSCFD) is the HXXXXD motif element.

The protein belongs to the taffazin family. Associates with multiple protein complexes. Association with large protein complexes occurs only in the presence of cardiolipin.

It is found in the mitochondrion outer membrane. The protein resides in the mitochondrion inner membrane. It localises to the mitochondrion. The protein localises to the mitochondrion membrane. Its subcellular location is the golgi apparatus membrane. It is found in the endoplasmic reticulum membrane. It catalyses the reaction 1'-[1,2-diacyl-sn-glycero-3-phospho],3'-[1-acyl-sn-glycero-3-phospho]-glycerol + a 1,2-diacyl-sn-glycero-3-phosphocholine = a cardiolipin + a 1-acyl-sn-glycero-3-phosphocholine. It carries out the reaction 1'-[1,2-di-(9Z,12Z-octadecadienoyl)-sn-glycero-3-phospho]-3'-[1-(9Z,12Z-octadecadienoyl)-sn-glycero-3-phospho]-glycerol + 1-hexadecanoyl-2-(9Z,12Z-octadecadienoyl)-sn-glycero-3-phosphocholine = 1',3'-bis-[1,2-di-(9Z,12Z-octadecadienoyl)-sn-glycero-3-phospho]-glycerol + 1-hexadecanoyl-sn-glycero-3-phosphocholine. The catalysed reaction is 1'-[1,2-di-(9Z,12Z-octadecadienoyl)-sn-glycero-3-phospho]-3'-[2-(9Z,12Z-octadecadienoyl)-sn-glycero-3-phospho]-glycerol + 1-hexadecanoyl-2-(9Z,12Z-octadecadienoyl)-sn-glycero-3-phosphocholine = 1',3'-bis-[1,2-di-(9Z,12Z-octadecadienoyl)-sn-glycero-3-phospho]-glycerol + 1-hexadecanoyl-sn-glycero-3-phosphocholine. The enzyme catalyses 1,2-di-(9Z,12Z-octadecadienoyl)-sn-glycero-3-phosphocholine + 1'-[1,2-di-(9Z,12Z-octadecadienoyl)-sn-glycero-3-phospho]-3'-[1-(9Z,12Z-octadecadienoyl)-sn-glycero-3-phospho]-glycerol = 1-(9Z,12Z)-octadecadienoyl-sn-glycero-3-phosphocholine + 1',3'-bis-[1,2-di-(9Z,12Z-octadecadienoyl)-sn-glycero-3-phospho]-glycerol. It catalyses the reaction 1-tetradecanoyl-sn-glycero-3-phosphocholine + 1',3'-bis-[1,2-di-(9Z,12Z-octadecadienoyl)-sn-glycero-3-phospho]-glycerol = 1-tetradecanoyl-2-(9Z,12Z-octadecadienoyl)-sn-glycero-3-phosphocholine + 1'-[1,2-di-(9Z,12Z-octadecadienoyl)-sn-glycero-3-phospho]-3'-[1-(9Z,12Z-octadecadienoyl)-sn-glycero-3-phospho]-glycerol. It carries out the reaction 1',3'-bis[1,2-di-(9Z-octadecenoyl)-sn-glycero-3-phospho]-glycerol + 1-nonadecanoyl-sn-glycero-3-phosphocholine = 1-nonadecanoyl-2-(9Z-octadecenoyl)-sn-glycero-3-phosphocholine + 1'-[1,2-di-(9Z-octadecenoyl)-sn-glycero-3-phospho]-3'-[1-(9Z-octadecenoyl)-sn-glycero-3-phospho]-glycerol. The catalysed reaction is a 1,2-diacyl-sn-glycero-3-phospho-(1'-sn-glycerol) + a 1-acyl-sn-glycero-3-phosphocholine = 1-acyl-sn-glycero-3-phospho-(1'-sn-glycerol) + a 1,2-diacyl-sn-glycero-3-phosphocholine. The enzyme catalyses 1-hexadecanoyl-2-(9Z,12Z-octadecadienoyl)-sn-glycero-3-phospho-(1'-sn-glycerol) + 1-hexadecanoyl-sn-glycero-3-phosphocholine = 1-hexadecanoyl-sn-glycero-3-phospho-(1'-sn-glycerol) + 1-hexadecanoyl-2-(9Z,12Z-octadecadienoyl)-sn-glycero-3-phosphocholine. It catalyses the reaction 1,2-di-(9Z-octadecenoyl)-sn-glycero-3-phospho-(1'-sn-glycerol) + 1-nonadecanoyl-sn-glycero-3-phosphocholine = 1-nonadecanoyl-2-(9Z-octadecenoyl)-sn-glycero-3-phosphocholine + 1-(9Z-octadecenoyl)-sn-glycero-3-phospho-(1'-sn-glycerol). It carries out the reaction a 1,2-diacyl-sn-glycero-3-phosphate + a 1-acyl-sn-glycero-3-phosphocholine = a 1-acyl-sn-glycero-3-phosphate + a 1,2-diacyl-sn-glycero-3-phosphocholine. The catalysed reaction is 1-hexadecanoyl-2-(9Z,12Z-octadecadienoyl)-sn-glycero-3-phosphate + 1-hexadecanoyl-sn-glycero-3-phosphocholine = 1-hexadecanoyl-2-(9Z,12Z-octadecadienoyl)-sn-glycero-3-phosphocholine + 1-hexadecanoyl-sn-glycero-3-phosphate. The enzyme catalyses 1-hexadecanoyl-2-(9Z,12Z-octadecadienoyl)-sn-glycero-3-phosphocholine + 1-(9Z-octadecenoyl)-sn-glycero-3-phosphate = 1-(9Z)-octadecenoyl-2-(9Z,12Z)-octadecadienoyl-sn-glycero-3-phosphate + 1-hexadecanoyl-sn-glycero-3-phosphocholine. It catalyses the reaction a 1-acyl-sn-glycero-3-phosphocholine + a 1,2-diacyl-sn-glycero-3-phosphoethanolamine = a 1-acyl-sn-glycero-3-phosphoethanolamine + a 1,2-diacyl-sn-glycero-3-phosphocholine. It carries out the reaction 1-hexadecanoyl-2-(9Z,12Z-octadecadienoyl)-sn-glycero-3-phosphoethanolamine + 1-hexadecanoyl-sn-glycero-3-phosphocholine = 1-hexadecanoyl-2-(9Z,12Z-octadecadienoyl)-sn-glycero-3-phosphocholine + 1-hexadecanoyl-sn-glycero-3-phosphoethanolamine. The catalysed reaction is 1,2-di-(9Z,12Z-octadecadienoyl)-sn-glycero-3-phosphoethanolamine + 1-tetradecanoyl-sn-glycero-3-phosphocholine = 1-(9Z,12Z-octadecadienoyl)-sn-glycero-3-phosphoethanolamine + 1-tetradecanoyl-2-(9Z,12Z-octadecadienoyl)-sn-glycero-3-phosphocholine. The enzyme catalyses 1'-[1,2-diacyl-sn-glycero-3-phospho],3'-[1-acyl-sn-glycero-3-phospho]-glycerol + a 1,2-diacyl-sn-glycero-3-phosphoethanolamine = a cardiolipin + a 1-acyl-sn-glycero-3-phosphoethanolamine. It catalyses the reaction 1-hexadecanoyl-2-(9Z,12Z-octadecadienoyl)-sn-glycero-3-phosphoethanolamine + 1'-[1,2-di-(9Z,12Z-octadecadienoyl)-sn-glycero-3-phospho]-3'-[1-(9Z,12Z-octadecadienoyl)-sn-glycero-3-phospho]-glycerol = 1',3'-bis-[1,2-di-(9Z,12Z-octadecadienoyl)-sn-glycero-3-phospho]-glycerol + 1-hexadecanoyl-sn-glycero-3-phosphoethanolamine. It carries out the reaction 1'-[1-(9Z,12Z-octadecadienoyl)-2-(9Z-octadecenoyl)-sn-glycero-3-phospho]-3'-[1-(9Z,12Z-octadecadienoyl)-sn-glycero-3-phospho]-glycerol + 1',3'-bis-[1,2-di-(9Z,12Z-octadecadienoyl)-sn-glycero-3-phospho]-glycerol = 1'-[1,2-di-(9Z,12Z-octadecadienoyl)-sn-glycero-3-phospho]-3'-[1-(9Z,12Z-octadecadienoyl)-2-(9Z-octadecenoyl)-sn-glycero-3-phospho]-glycerol + 1'-[1,2-di-(9Z,12Z-octadecadienoyl)-sn-glycero-3-phospho]-3'-[1-(9Z,12Z-octadecadienoyl)-sn-glycero-3-phospho]-glycerol. The catalysed reaction is 1,2-di-(9Z-hexadecenoyl)-sn-glycero-3-phosphocholine + 1-hexadecanoyl-sn-glycero-3-phosphocholine = 1-hexadecanoyl-2-(9Z-hexadecenoyl)-sn-glycero-3-phosphocholine + 1-(9Z-hexadecenoyl)-sn-glycero-3-phosphocholine. The enzyme catalyses 1,2-dioctadecanoyl-sn-glycero-3-phosphocholine + 1-hexadecanoyl-sn-glycero-3-phosphocholine = 1-hexadecanoyl-2-octadecanoyl-sn-glycero-3-phosphocholine + 1-octadecanoyl-sn-glycero-3-phosphocholine. It catalyses the reaction 1,2-di-(9Z-octadecenoyl)-sn-glycero-3-phosphocholine + 1-hexadecanoyl-sn-glycero-3-phosphocholine = 1-hexadecanoyl-2-(9Z-octadecenoyl)-sn-glycero-3-phosphocholine + 1-(9Z-octadecenoyl)-sn-glycero-3-phosphocholine. It carries out the reaction 1,2-di-(9Z,12Z-octadecadienoyl)-sn-glycero-3-phosphocholine + 1-(9Z-octadecenoyl)-sn-glycero-3-phosphocholine = 1-(9Z)-octadecenoyl-2-(9Z,12Z)-octadecadienoyl-sn-glycero-3-phosphocholine + 1-(9Z,12Z)-octadecadienoyl-sn-glycero-3-phosphocholine. The catalysed reaction is 1,2-di-(9Z,12Z,15Z-octadecatrienoyl)-sn-glycero-3-phosphocholine + 1-tetradecanoyl-sn-glycero-3-phosphocholine = 1-tetradecanoyl-2-(9Z,12Z,15Z-octadecatrienoyl)-sn-glycero-3-phosphocholine + 1-(9Z,12Z,15Z-octadecatrienoyl)-sn-glycero-3-phosphocholine. The enzyme catalyses 1-nonadecanoyl-sn-glycero-3-phosphocholine + 1-octadecanoyl-2-(9Z-octadecenoyl)-sn-glycero-3-phosphocholine = 1-nonadecanoyl-2-(9Z-octadecenoyl)-sn-glycero-3-phosphocholine + 1-octadecanoyl-sn-glycero-3-phosphocholine. It catalyses the reaction 1-(9Z)-octadecenoyl-2-octadecanoyl-sn-glycero-3-phosphocholine + 1-nonadecanoyl-sn-glycero-3-phosphocholine = 2-octadecanoyl-sn-glycero-3-phosphocholine + 1-nonadecanoyl-2-(9Z-octadecenoyl)-sn-glycero-3-phosphocholine. It functions in the pathway phospholipid metabolism. In terms of biological role, acyltransferase required to remodel newly synthesized phospholipid cardiolipin (1',3'-bis-[1,2-diacyl-sn-glycero-3-phospho]-glycerol or CL), a key component of the mitochondrial inner membrane, with tissue specific acyl chains necessary for adequate mitochondrial function. Its role in cellular physiology is to improve mitochondrial performance. CL is critical for the coassembly of lipids and proteins in mitochondrial membranes. For instance, remodeling of the acyl groups of CL in the mitochondrial inner membrane affects the assembly and stability of respiratory chain complex IV and its supercomplex forms. Catalyzes the transacylation between phospholipids and lysophospholipids, with the highest rate being between phosphatidylcholine (1,2-diacyl-sn-glycero-3-phosphocholine or PC) and CL. Catalyzes both 1-acyl-sn-glycero-3-phosphocholine (lysophosphatidylcholine or LPC) reacylation and PC-CL transacylation, that means, it exchanges acyl groups between CL and PC by a combination of forward and reverse transacylations. Also catalyzes transacylations between other phospholipids such as phosphatidylethanolamine (1,2-diacyl-sn-glycero-3-phosphoethanolamine or PE) and CL, between PC and PE, and between PC and phosphatidate (1,2-diacyl-sn-glycero-3-phosphate or PA), although at lower rate. Not regiospecific, it transfers acyl groups into any of the sn-1 and sn-2 positions of the monolysocardiolipin (MLCL), which is an important prerequisite for uniformity and symmetry in CL acyl distribution. Cannot transacylate dilysocardiolipin (DLCL), thus, the role of MLCL is limited to that of an acyl acceptor. CoA-independent, it can reshuffle molecular species within a single phospholipid class. Redistributes fatty acids between MLCL, CL, and other lipids, which prolongs the half-life of CL. Its action is completely reversible, which allows for cyclic changes, such as fission and fusion or bending and flattening of the membrane. Hence, by contributing to the flexibility of the lipid composition, it plays an important role in the dynamics of mitochondria membranes. Essential for the final stage of spermatogenesis, spermatid individualization. Required for the initiation of mitophagy. The chain is Tafazzin from Drosophila melanogaster (Fruit fly).